The sequence spans 524 residues: Alkaline phosphatase, tissue-nonspecific isozyme (524 aa).

The N-terminal stretch at methionine 1–serine 17 is a signal peptide. Aspartate 60 is a Mg(2+) binding site. The Zn(2+) site is built by aspartate 60 and serine 110. Serine 110 acts as the Phosphoserine intermediate in catalysis. Serine 110 carries the post-translational modification Phosphoserine. The cysteines at positions 139 and 201 are disulfide-linked. A glycan (N-linked (GlcNAc...) asparagine) is linked at asparagine 140. Threonine 173 provides a ligand contact to Mg(2+). A glycan (N-linked (GlcNAc...) asparagine) is linked at asparagine 230. Glutamate 235 is a binding site for Ca(2+). A glycan (N-linked (GlcNAc...) asparagine) is linked at asparagine 271. 2 residues coordinate Ca(2+): phenylalanine 290 and glutamate 291. A glycan (N-linked (GlcNAc...) asparagine) is linked at asparagine 302. Residue aspartate 306 coordinates Ca(2+). Glutamate 332 is a binding site for Mg(2+). Positions 337, 341, 378, and 379 each coordinate Zn(2+). A glycan (N-linked (GlcNAc...) asparagine) is linked at asparagine 430. Residue histidine 454 participates in Zn(2+) binding. A disulfide bond links cysteine 489 and cysteine 497. Serine 499 is lipidated: GPI-anchor amidated serine. Positions alanine 500–phenylalanine 524 are cleaved as a propeptide — removed in mature form.

This sequence belongs to the alkaline phosphatase family. In terms of assembly, homodimer. Requires Mg(2+) as cofactor. Zn(2+) serves as cofactor. The cofactor is Ca(2+). Post-translationally, N-glycosylated.

Its subcellular location is the cell membrane. The protein resides in the extracellular vesicle membrane. It localises to the mitochondrion membrane. The protein localises to the mitochondrion intermembrane space. It catalyses the reaction a phosphate monoester + H2O = an alcohol + phosphate. The enzyme catalyses diphosphate + H2O = 2 phosphate + H(+). The catalysed reaction is pyridoxal 5'-phosphate + H2O = pyridoxal + phosphate. It carries out the reaction phosphoethanolamine + H2O = ethanolamine + phosphate. It catalyses the reaction N-phosphocreatine + H2O = creatine + phosphate. The enzyme catalyses ATP + H2O = ADP + phosphate + H(+). The catalysed reaction is ADP + H2O = AMP + phosphate + H(+). It carries out the reaction AMP + H2O = adenosine + phosphate. Phosphatase activity is specifically inhibited by 5-((5-chloro-2-methoxyphenyl)sulfonamido)nicotinamide (SBI-425). Functionally, alkaline phosphatase that metabolizes various phosphate compounds and plays a key role in skeletal mineralization and adaptive thermogenesis. Has broad substrate specificity and can hydrolyze a considerable variety of compounds: however, only a few substrates, such as diphosphate (inorganic pyrophosphate; PPi), pyridoxal 5'-phosphate (PLP) and N-phosphocreatine are natural substrates. Plays an essential role in skeletal and dental mineralization via its ability to hydrolyze extracellular diphosphate, a potent mineralization inhibitor, to phosphate: it thereby promotes hydroxyapatite crystal formation and increases inorganic phosphate concentration. Acts in a non-redundant manner with PHOSPHO1 in skeletal mineralization: while PHOSPHO1 mediates the initiation of hydroxyapatite crystallization in the matrix vesicles (MVs), ALPL/TNAP catalyzes the spread of hydroxyapatite crystallization in the extracellular matrix. Also promotes dephosphorylation of osteopontin (SSP1), an inhibitor of hydroxyapatite crystallization in its phosphorylated state; it is however unclear whether ALPL/TNAP mediates SSP1 dephosphorylation via a direct or indirect manner. Catalyzes dephosphorylation of PLP to pyridoxal (PL), the transportable form of vitamin B6, in order to provide a sufficient amount of PLP in the brain, an essential cofactor for enzymes catalyzing the synthesis of diverse neurotransmitters. Additionally, also able to mediate ATP degradation in a stepwise manner to adenosine, thereby regulating the availability of ligands for purinergic receptors. Also capable of dephosphorylating microbial products, such as lipopolysaccharides (LPS) as well as other phosphorylated small-molecules, such as poly-inosine:cytosine (poly I:C). Acts as a key regulator of adaptive thermogenesis as part of the futile creatine cycle: localizes to the mitochondria of thermogenic fat cells and acts by mediating hydrolysis of N-phosphocreatine to initiate a futile cycle of creatine dephosphorylation and phosphorylation. During the futile creatine cycle, creatine and N-phosphocreatine are in a futile cycle, which dissipates the high energy charge of N-phosphocreatine as heat without performing any mechanical or chemical work. The chain is Alkaline phosphatase, tissue-nonspecific isozyme (ALPL) from Felis catus (Cat).